The sequence spans 380 residues: Ubiquitin-like protein 7 (380 aa).

The Ubiquitin-like domain occupies 18–98; the sequence is APKSILQLPE…VLRKSWPEPD (81 aa). Positions 200–313 are disordered; it reads TPMPGADSSS…SSGVQSGTPI (114 aa). Residues 206-221 are compositionally biased toward low complexity; it reads DSSSRSMPSSSYRDMP. Serine 230 carries the phosphoserine modification. Composition is skewed to low complexity over residues 239–253 and 270–293; these read STRSTPSSSTPSSRP and SELATALALASTPESSSHTPTPGT. The span at 294–313 shows a compositional bias: polar residues; that stretch reads QGHSSGTSPMSSGVQSGTPI. The 45-residue stretch at 333–377 folds into the UBA domain; that stretch reads SLQIQWQPQLQQLRDMGIQDDELSLRALQATGGDIQAALELIFAG.

Binds ubiquitin. Interacts with MAVS; this interaction enhances TRIM21-dependent 'Lys-27'-linked polyubiquitination of MAVS. Deubiquitinated by OTUD4 which stabilizes UBL7 expression.

Its function is as follows. Interferon-stimulated protein that positively regulates RNA virus-triggered innate immune signaling. Mechanistically, promotes 'Lys-27'-linked polyubiquitination of MAVS through TRIM21 leading to enhanced the IFN signaling pathway. This chain is Ubiquitin-like protein 7 (Ubl7), found in Mus musculus (Mouse).